The primary structure comprises 391 residues: Putative neutrophil cytosol factor 1B (391 aa).

In terms of domain architecture, PX spans 1-126 (MGDTFIRHIA…DFFKVRPDDL (126 aa)). SH3 domains lie at 157–216 (IILQ…PLDS) and 227–286 (YAGE…KSGQ). The segment at 286 to 391 (QDVSQAQRQI…STKRKLASAV (106 aa)) is disordered. Ser304 and Ser305 each carry phosphoserine. A compositionally biased stretch (basic residues) spans 310–319 (HSIHQRSRKR). Phosphoserine is present on residues Ser321, Ser329, Ser346, and Ser349.

It is found in the cytoplasm. Functionally, may be required for activation of the latent NADPH oxidase (necessary for superoxide production). The chain is Putative neutrophil cytosol factor 1B (NCF1B) from Homo sapiens (Human).